A 126-amino-acid chain; its full sequence is Holo-[acyl-carrier-protein] synthase (126 aa).

Residues Asp8 and Glu57 each contribute to the Mg(2+) site.

Belongs to the P-Pant transferase superfamily. AcpS family. It depends on Mg(2+) as a cofactor.

The protein localises to the cytoplasm. It catalyses the reaction apo-[ACP] + CoA = holo-[ACP] + adenosine 3',5'-bisphosphate + H(+). Functionally, transfers the 4'-phosphopantetheine moiety from coenzyme A to a Ser of acyl-carrier-protein. In Leptospira interrogans serogroup Icterohaemorrhagiae serovar copenhageni (strain Fiocruz L1-130), this protein is Holo-[acyl-carrier-protein] synthase.